A 745-amino-acid polypeptide reads, in one-letter code: Polyribonucleotide nucleotidyltransferase (745 aa).

Residues D487 and D493 each contribute to the Mg(2+) site. In terms of domain architecture, KH spans 554-613 (PSSTTVKIDKDKIKDIIGPGGKIIKEICETSNAKIDISDDGTVSIYASDRDKIKIALDKI). The S1 motif domain maps to 623–691 (GEIFNGTVMK…NKGKAKLTIK (69 aa)). A disordered region spans residues 693-732 (AYKDHSSNNTKQKNNVKDDSESEQRRDTSKKRTWNEDNNT). The span at 707–719 (NVKDDSESEQRRD) shows a compositional bias: basic and acidic residues.

The protein belongs to the polyribonucleotide nucleotidyltransferase family. Requires Mg(2+) as cofactor.

The protein resides in the cytoplasm. It catalyses the reaction RNA(n+1) + phosphate = RNA(n) + a ribonucleoside 5'-diphosphate. Its function is as follows. Involved in mRNA degradation. Catalyzes the phosphorolysis of single-stranded polyribonucleotides processively in the 3'- to 5'-direction. The protein is Polyribonucleotide nucleotidyltransferase of Rickettsia prowazekii (strain Madrid E).